A 477-amino-acid chain; its full sequence is Secreted RxLR effector protein 102 (477 aa).

A signal peptide spans 1–20; that stretch reads MRGGYYVLTALFVVASSEIA. The RxLR-dEER signature appears at 48 to 65; that stretch reads RFLRESRGVHGNVANEER. Disordered regions lie at residues 326–345, 351–370, 376–401, and 433–455; these read SKGQ…TSKG, IKRS…LPSI, SSKS…KRSR, and PRSA…APSS.

It belongs to the RxLR effector family.

The protein localises to the secreted. It localises to the host nucleus. In terms of biological role, secreted effector that acts as an elicitor that induces cell death in host plant cells. This Plasmopara viticola (Downy mildew of grapevine) protein is Secreted RxLR effector protein 102.